The following is a 470-amino-acid chain: Siroheme synthase (470 aa).

A precorrin-2 dehydrogenase /sirohydrochlorin ferrochelatase region spans residues 1–213; that stretch reads MSDATDPGWF…GEHAAARQVL (213 aa). Residues 28–29 and 49–50 each bind NAD(+); these read GI and PR. Positions 224–470 are uroporphyrinogen-III C-methyltransferase; the sequence is GEVWLVGAGP…VVTPPPLSGT (247 aa). Proline 233 contributes to the S-adenosyl-L-methionine binding site. Aspartate 256 serves as the catalytic Proton acceptor. Lysine 278 functions as the Proton donor in the catalytic mechanism. S-adenosyl-L-methionine is bound by residues 309–311, isoleucine 314, 339–340, methionine 392, and glycine 421; these read GGD and TA.

In the N-terminal section; belongs to the precorrin-2 dehydrogenase / sirohydrochlorin ferrochelatase family. The protein in the C-terminal section; belongs to the precorrin methyltransferase family.

The catalysed reaction is uroporphyrinogen III + 2 S-adenosyl-L-methionine = precorrin-2 + 2 S-adenosyl-L-homocysteine + H(+). It catalyses the reaction precorrin-2 + NAD(+) = sirohydrochlorin + NADH + 2 H(+). The enzyme catalyses siroheme + 2 H(+) = sirohydrochlorin + Fe(2+). It functions in the pathway cofactor biosynthesis; adenosylcobalamin biosynthesis; precorrin-2 from uroporphyrinogen III: step 1/1. Its pathway is cofactor biosynthesis; adenosylcobalamin biosynthesis; sirohydrochlorin from precorrin-2: step 1/1. It participates in porphyrin-containing compound metabolism; siroheme biosynthesis; precorrin-2 from uroporphyrinogen III: step 1/1. The protein operates within porphyrin-containing compound metabolism; siroheme biosynthesis; siroheme from sirohydrochlorin: step 1/1. It functions in the pathway porphyrin-containing compound metabolism; siroheme biosynthesis; sirohydrochlorin from precorrin-2: step 1/1. Multifunctional enzyme that catalyzes the SAM-dependent methylations of uroporphyrinogen III at position C-2 and C-7 to form precorrin-2 via precorrin-1. Then it catalyzes the NAD-dependent ring dehydrogenation of precorrin-2 to yield sirohydrochlorin. Finally, it catalyzes the ferrochelation of sirohydrochlorin to yield siroheme. This is Siroheme synthase from Gluconacetobacter diazotrophicus (strain ATCC 49037 / DSM 5601 / CCUG 37298 / CIP 103539 / LMG 7603 / PAl5).